Consider the following 204-residue polypeptide: Holliday junction branch migration complex subunit RuvA (204 aa).

Positions 1–64 (MIGKLKGTID…EDQLKLFGFM (64 aa)) are domain I. A domain II region spans residues 65–143 (TALEREWFNL…AFAGEAINIA (79 aa)). Residues 144–151 (LKQELGEG) form a flexible linker region. The interval 152-204 (VAAAPVADAVSALTNLGYSRDQAANAVAAAMKTAGDDADSAKLIRLGLKELAR) is domain III.

This sequence belongs to the RuvA family. Homotetramer. Forms an RuvA(8)-RuvB(12)-Holliday junction (HJ) complex. HJ DNA is sandwiched between 2 RuvA tetramers; dsDNA enters through RuvA and exits via RuvB. An RuvB hexamer assembles on each DNA strand where it exits the tetramer. Each RuvB hexamer is contacted by two RuvA subunits (via domain III) on 2 adjacent RuvB subunits; this complex drives branch migration. In the full resolvosome a probable DNA-RuvA(4)-RuvB(12)-RuvC(2) complex forms which resolves the HJ.

It localises to the cytoplasm. Functionally, the RuvA-RuvB-RuvC complex processes Holliday junction (HJ) DNA during genetic recombination and DNA repair, while the RuvA-RuvB complex plays an important role in the rescue of blocked DNA replication forks via replication fork reversal (RFR). RuvA specifically binds to HJ cruciform DNA, conferring on it an open structure. The RuvB hexamer acts as an ATP-dependent pump, pulling dsDNA into and through the RuvAB complex. HJ branch migration allows RuvC to scan DNA until it finds its consensus sequence, where it cleaves and resolves the cruciform DNA. The protein is Holliday junction branch migration complex subunit RuvA of Rhizobium leguminosarum bv. trifolii (strain WSM2304).